The primary structure comprises 64 residues: Large ribosomal subunit protein bL33c (64 aa).

This sequence belongs to the bacterial ribosomal protein bL33 family.

It is found in the plastid. It localises to the organellar chromatophore. The sequence is that of Large ribosomal subunit protein bL33c from Paulinella chromatophora.